The chain runs to 355 residues: IgG receptor FcRn large subunit p51 (355 aa).

An N-terminal signal peptide occupies residues Met-1–Ala-24. The segment at Ala-25–Ser-111 is alpha-1. The Extracellular portion of the chain corresponds to Ala-25–Pro-300. The segment at Tyr-112–Lys-201 is alpha-2. Asn-126 carries N-linked (GlcNAc...) asparagine glycosylation. Residues Glu-202–Leu-291 are alpha-3. The 90-residue stretch at Pro-203–Glu-292 folds into the Ig-like C1-type domain. Cysteines 222 and 276 form a disulfide. Residues Ser-293 to Ser-298 are connecting peptide. Residues Val-301–Leu-321 traverse the membrane as a helical segment. Over Trp-322–Ser-355 the chain is Cytoplasmic.

It belongs to the immunoglobulin superfamily. In terms of assembly, fcRn complex consists of two subunits: p51, and p14 which is equivalent to beta-2-microglobulin. It forms an MHC class I-like heterodimer. Interacts with albumin/ALB; this interaction regulates ALB homeostasis. As to expression, expressed in liver and mammary gland of non-lactating animals. Expressed in hepatocytes and in epithelial cells of portal bile ductuli. Not expressed in the brances of portal veins or hepatic arteries. Expressed in the epithelial cells of the acini and ducti in the mammary gland with expression emphasized at the apical side. Not expressed in blood vessels of mammary gland.

Its subcellular location is the cell membrane. It is found in the endosome membrane. Cell surface receptor that transfers passive humoral immunity from the mother to the newborn. Binds to the Fc region of monomeric immunoglobulin gamma and mediates its selective uptake from milk. IgG in the milk is bound at the apical surface of the intestinal epithelium. The resultant FcRn-IgG complexes are transcytosed across the intestinal epithelium and IgG is released from FcRn into blood or tissue fluids. Throughout life, contributes to effective humoral immunity by recycling IgG and extending its half-life in the circulation. Mechanistically, monomeric IgG binding to FcRn in acidic endosomes of endothelial and hematopoietic cells recycles IgG to the cell surface where it is released into the circulation. In addition of IgG, regulates homeostasis of the other most abundant circulating protein albumin/ALB. The polypeptide is IgG receptor FcRn large subunit p51 (Camelus dromedarius (Dromedary)).